Reading from the N-terminus, the 485-residue chain is Lysine--tRNA ligase (485 aa).

Mg(2+)-binding residues include E391 and E398.

Belongs to the class-II aminoacyl-tRNA synthetase family. Homodimer. Mg(2+) serves as cofactor.

Its subcellular location is the cytoplasm. It carries out the reaction tRNA(Lys) + L-lysine + ATP = L-lysyl-tRNA(Lys) + AMP + diphosphate. In Blochmanniella floridana, this protein is Lysine--tRNA ligase.